The chain runs to 131 residues: Transcription antitermination protein NusB (131 aa).

This sequence belongs to the NusB family.

Involved in transcription antitermination. Required for transcription of ribosomal RNA (rRNA) genes. Binds specifically to the boxA antiterminator sequence of the ribosomal RNA (rrn) operons. This chain is Transcription antitermination protein NusB, found in Agathobacter rectalis (strain ATCC 33656 / DSM 3377 / JCM 17463 / KCTC 5835 / VPI 0990) (Eubacterium rectale).